The primary structure comprises 539 residues: Carotene epsilon-monooxygenase, chloroplastic (539 aa).

The N-terminal 36 residues, 1–36 (MESSLFSPSSSSYSSLFTAKPTRLLSPKPKFTFSIR), are a transit peptide targeting the chloroplast. C487 is a binding site for heme.

This sequence belongs to the cytochrome P450 family. Heme serves as cofactor.

The protein resides in the plastid. Its subcellular location is the chloroplast. It carries out the reaction alpha-carotene + reduced [NADPH--hemoprotein reductase] + O2 = alpha-cryptoxanthin + oxidized [NADPH--hemoprotein reductase] + H2O + H(+). The enzyme catalyses zeinoxanthin + reduced [NADPH--hemoprotein reductase] + O2 = lutein + oxidized [NADPH--hemoprotein reductase] + H2O + H(+). In terms of biological role, heme-containing cytochrome P450 involved in the biosynthesis of xanthophylls. Specific for epsilon- and beta-ring hydroxylation of alpha-carotene. Has only a low activity toward the beta-rings of beta-carotene. The preferred substrate in planta is not alpha-carotene but the epsilon-ring of zeinoxanthin. Possesses a major beta-carotene hydroxylase activity in planta when depleted in its preferred substrate alpha-carotene. This chain is Carotene epsilon-monooxygenase, chloroplastic (CYP97C1), found in Arabidopsis thaliana (Mouse-ear cress).